The chain runs to 642 residues: Dihydrolipoyllysine-residue acetyltransferase component of pyruvate dehydrogenase complex, mitochondrial (642 aa).

A mitochondrion-targeting transit peptide spans 1–85 (MWRVCARRAR…LLGSPSRRSY (85 aa)). Residues 80 to 99 (PSRRSYSLPPHQKVPLPSLS) form a disordered region. Lipoyl-binding domains are found at residues 90-166 (HQKV…CITV) and 217-293 (HMQI…CIIV). Position 99 is a phosphoserine (Ser99). N6-lipoyllysine is present on residues Lys131 and Lys258. The tract at residues 313 to 346 (LKPQAAPPAPPPVAAVPPTPQPVAPTPSAAPAGP) is disordered. Positions 317-337 (AAPPAPPPVAAVPPTPQPVAP) are enriched in pro residues. Residues 351 to 388 (FVSPLAKKLAAEKGIDLTQVKGTGPEGRIIKKDIDSFV) enclose the Peripheral subunit-binding (PSBD) domain. Arg456 provides a ligand contact to CoA. Lys461 is modified (N6-acetyllysine). Lys468 bears the N6-succinyllysine mark. Ser470 is a binding site for CoA. Lys542 carries the N6-succinyllysine modification. The CoA site is built by Ser561, Asn562, and Gly586. Active-site residues include His615 and Asp619.

Belongs to the 2-oxoacid dehydrogenase family. Part of the pyruvate dehydrogenase complex (PDHc) that is a multi-enzyme complex composed of multiple copies of three enzymes, pyruvate dehydrogenase (subunits PDH1A and PDHB, E1 component), dihydrolipoamide acetyltransferase (DLAT, E2 component), and dihydrolipoamide dehydrogenase (DLD, E3 component) to which is added an additional protein the E3-binding protein (PDHX, E3BP). In terms of structural architecture, the E2 and E3BP components assemble into a 60meric central core with icosahedral symmetry. The central core is decorated with E1 and E3 proteins. Currently, two alternative models for the E2:E3BP stoichiometry are considered as being either 48:12 (E2(48)-E3BP(12)) or 40:20 (E2(40)-E3BP(20)). Interacts with PDK2 and PDK3. Interacts with SIRT4. Interacts with PDHB. It depends on (R)-lipoate as a cofactor. Delipoylated at Lys-131 and Lys-258 by SIRT4, delipoylation decreases the PHD complex activity.

The protein localises to the mitochondrion matrix. The catalysed reaction is N(6)-[(R)-dihydrolipoyl]-L-lysyl-[protein] + acetyl-CoA = N(6)-[(R)-S(8)-acetyldihydrolipoyl]-L-lysyl-[protein] + CoA. As part of the pyruvate dehydrogenase complex, catalyzes the transfers of an acetyl group to a lipoic acid moiety. The pyruvate dehydrogenase complex, catalyzes the overall conversion of pyruvate to acetyl-CoA and CO(2), and thereby links cytoplasmic glycolysis and the mitochondrial tricarboxylic acid (TCA) cycle. The sequence is that of Dihydrolipoyllysine-residue acetyltransferase component of pyruvate dehydrogenase complex, mitochondrial from Mus musculus (Mouse).